Reading from the N-terminus, the 912-residue chain is Effector protein hopAE1 (912 aa).

Residues 1–13 (MMPSQITRSSHSS) show a composition bias toward polar residues. A disordered region spans residues 1–32 (MMPSQITRSSHSSLPEVAPASGDATGVSEQTP).

It belongs to the HopW family.

The protein localises to the secreted. This chain is Effector protein hopAE1 (hopAE1), found in Pseudomonas savastanoi pv. phaseolicola (strain 1448A / Race 6) (Pseudomonas syringae pv. phaseolicola (strain 1448A / Race 6)).